The following is a 955-amino-acid chain: Histone deacetylase 6 (955 aa).

2 histone deacetylase regions span residues 15–337 and 425–749; these read TLIG…YAPF and METL…VLQN. Residue histidine 146 is the 1 of the active site. The 2 role is filled by histidine 561. The segment at 815–840 is disordered; sequence SIDMADQSSSSGSSSSSTRPSHNLEI. The span at 818–831 shows a compositional bias: low complexity; that stretch reads MADQSSSSGSSSSS. The UBP-type zinc-finger motif lies at 853 to 951; that stretch reads ATCPHLKEVK…SAAHESKFGE (99 aa). Residues cysteine 855, histidine 857, cysteine 875, cysteine 878, cysteine 887, cysteine 890, and cysteine 895 each contribute to the Zn(2+) site. The tract at residues 896–898 is ubiquitin binding; sequence GRF. Residues histidine 902, histidine 906, histidine 912, cysteine 925, and cysteine 928 each coordinate Zn(2+). A ubiquitin binding region spans residues 924–931; sequence WCYPCDSY.

The protein belongs to the histone deacetylase family. HD type 2 subfamily. It depends on Zn(2+) as a cofactor.

The protein resides in the nucleus. The catalysed reaction is N(6)-acetyl-L-lysyl-[histone] + H2O = L-lysyl-[histone] + acetate. In terms of biological role, probable histone deacetylase. Histone deacetylases are responsible for the deacetylation of lysine residues on the N-terminal part of the core histones (H2A, H2B, H3 and H4). Histone deacetylation gives a tag for epigenetic repression and plays an important role in transcriptional regulation, cell cycle progression and developmental events. Histone deacetylases act via the formation of large multiprotein complexes. In Caenorhabditis elegans, this protein is Histone deacetylase 6 (hda-6).